Reading from the N-terminus, the 191-residue chain is Cytochrome c oxidase assembly protein CtaG (191 aa).

Residues 1 to 9 (MALNGPQKT) are Cytoplasmic-facing. The chain crosses the membrane as a helical; Signal-anchor for type II membrane protein span at residues 10 to 30 (VVQLVSVVVVMGGLAWASVPF). Residues 31–191 (YDWFCRVTGF…LDAGEKTNTN (161 aa)) are Periplasmic-facing.

It belongs to the COX11/CtaG family.

The protein resides in the cell inner membrane. In terms of biological role, exerts its effect at some terminal stage of cytochrome c oxidase synthesis, probably by being involved in the insertion of the copper B into subunit I. This chain is Cytochrome c oxidase assembly protein CtaG, found in Ruegeria pomeroyi (strain ATCC 700808 / DSM 15171 / DSS-3) (Silicibacter pomeroyi).